The sequence spans 95 residues: Large ribosomal subunit protein bL25 (95 aa).

This sequence belongs to the bacterial ribosomal protein bL25 family. In terms of assembly, part of the 50S ribosomal subunit; part of the 5S rRNA/L5/L18/L25 subcomplex. Contacts the 5S rRNA. Binds to the 5S rRNA independently of L5 and L18.

Its function is as follows. This is one of the proteins that binds to the 5S RNA in the ribosome where it forms part of the central protuberance. In Actinobacillus pleuropneumoniae serotype 5b (strain L20), this protein is Large ribosomal subunit protein bL25.